Here is a 234-residue protein sequence, read N- to C-terminus: uncharacterized protein (234 aa).

Residues 1–23 are disordered; it reads MVDQIRSPSWKSGFPSHQHQQGS.

This is an uncharacterized protein from Caenorhabditis elegans.